A 159-amino-acid polypeptide reads, in one-letter code: NADH-quinone oxidoreductase subunit I (159 aa).

4Fe-4S ferredoxin-type domains follow at residues 51–80 (RRYE…IESD) and 90–119 (TRYD…EGPN). [4Fe-4S] cluster is bound by residues cysteine 60, cysteine 63, cysteine 66, cysteine 70, cysteine 99, cysteine 102, cysteine 105, and cysteine 109.

It belongs to the complex I 23 kDa subunit family. In terms of assembly, NDH-1 is composed of 14 different subunits. Subunits NuoA, H, J, K, L, M, N constitute the membrane sector of the complex. The cofactor is [4Fe-4S] cluster.

It is found in the cell inner membrane. It catalyses the reaction a quinone + NADH + 5 H(+)(in) = a quinol + NAD(+) + 4 H(+)(out). In terms of biological role, NDH-1 shuttles electrons from NADH, via FMN and iron-sulfur (Fe-S) centers, to quinones in the respiratory chain. The immediate electron acceptor for the enzyme in this species is believed to be ubiquinone. Couples the redox reaction to proton translocation (for every two electrons transferred, four hydrogen ions are translocated across the cytoplasmic membrane), and thus conserves the redox energy in a proton gradient. The chain is NADH-quinone oxidoreductase subunit I from Rickettsia prowazekii (strain Madrid E).